A 75-amino-acid polypeptide reads, in one-letter code: UPF0154 protein MMOB4450 (75 aa).

The chain crosses the membrane as a helical span at residues 7–27 (IGLIVGLSILFTIVGLVVGFF).

Belongs to the UPF0154 family.

The protein resides in the cell membrane. This Mycoplasma mobile (strain ATCC 43663 / 163K / NCTC 11711) (Mesomycoplasma mobile) protein is UPF0154 protein MMOB4450.